The sequence spans 108 residues: Tetrahydromethanopterin S-methyltransferase subunit B (108 aa).

Residues phenylalanine 77–valine 99 traverse the membrane as a helical segment.

Belongs to the MtrB family. As to quaternary structure, the complex is composed of 8 subunits; MtrA, MtrB, MtrC, MtrD, MtrE, MtrF, MtrG and MtrH.

It is found in the cell membrane. It catalyses the reaction 5-methyl-5,6,7,8-tetrahydromethanopterin + coenzyme M + 2 Na(+)(in) = 5,6,7,8-tetrahydromethanopterin + methyl-coenzyme M + 2 Na(+)(out). The protein operates within one-carbon metabolism; methanogenesis from CO(2); methyl-coenzyme M from 5,10-methylene-5,6,7,8-tetrahydromethanopterin: step 2/2. Part of a complex that catalyzes the formation of methyl-coenzyme M and tetrahydromethanopterin from coenzyme M and methyl-tetrahydromethanopterin. This is an energy-conserving, sodium-ion translocating step. The polypeptide is Tetrahydromethanopterin S-methyltransferase subunit B (Methanococcus maripaludis (strain DSM 14266 / JCM 13030 / NBRC 101832 / S2 / LL)).